We begin with the raw amino-acid sequence, 166 residues long: Small ribosomal subunit protein uS5 (166 aa).

The S5 DRBM domain occupies 11–74; that stretch reads LQEKLIAVNR…EKARRNMINV (64 aa).

This sequence belongs to the universal ribosomal protein uS5 family. Part of the 30S ribosomal subunit. Contacts proteins S4 and S8.

Functionally, with S4 and S12 plays an important role in translational accuracy. Its function is as follows. Located at the back of the 30S subunit body where it stabilizes the conformation of the head with respect to the body. This Actinobacillus pleuropneumoniae serotype 5b (strain L20) protein is Small ribosomal subunit protein uS5.